Here is a 258-residue protein sequence, read N- to C-terminus: MIIDFKKYSSVRIGNEFEVLVLDQICDFDGFLIGGANNLLVSPKPKNIGILGDGFNFIQILDRNKDFIHLRIGCKTKSSKMYRFAKENNLKGFEYLSKIPGTLGGLLKMNAGLKGECISQNLIKIATSQGEILRANINFDYRFCPLNTHFFWAEFKLNFGFDTLKDEALKNARSNQPSGASFGSIFKNPKNDFAGRLIEAVGLKGFSKGDAMLSDKHANFLINKKNASFEDAFFLIELARKKVFEEFGTNLENEVIII.

Arginine 142 is a catalytic residue. Serine 184 (proton donor) is an active-site residue. Glutamate 254 is an active-site residue.

The protein belongs to the MurB family. FAD serves as cofactor.

The protein resides in the cytoplasm. The catalysed reaction is UDP-N-acetyl-alpha-D-muramate + NADP(+) = UDP-N-acetyl-3-O-(1-carboxyvinyl)-alpha-D-glucosamine + NADPH + H(+). Its pathway is cell wall biogenesis; peptidoglycan biosynthesis. Cell wall formation. The protein is UDP-N-acetylenolpyruvoylglucosamine reductase of Campylobacter jejuni subsp. jejuni serotype O:2 (strain ATCC 700819 / NCTC 11168).